The sequence spans 394 residues: MAPAMEEIRQAQRAEGPAAVLAIGTSTPPNALYQADYPDYYFRITKSEHLTELKEKFKRMCDKSMIKKRYMYLTEEILKENPNICAFMAPSLDARQDIVVTEVPKLAKEAAVRAIKEWGHPKSRITHLIFCTTSGIDMPGADYQLTRLLGLRPSVNRFMLYQQGCFAGGTVLRLAKDLAENNAGARVLVVCSEITAVTFRGPSESHLDSLVGQALFGDGAAAIIVGSDPDSATERPLFQLVSASQTILPESEGAIDGHLREIGLTFHLLKDVPGLISKNIQKCLLDAFKPLGVHDWNSIFWIAHPGGPAILDQVEIKLGLKAEKLAASRSVLAEYGNMSSACVLFILDEMRRRSAEAGQATTGEGLEWGVLFGFGPGLTVETIVLRSVPIAGAE.

Residue cysteine 165 is part of the active site.

It belongs to the thiolase-like superfamily. Chalcone/stilbene synthases family.

The enzyme catalyses (E)-4-coumaroyl-CoA + 3 malonyl-CoA + 3 H(+) = 2',4,4',6'-tetrahydroxychalcone + 3 CO2 + 4 CoA. It functions in the pathway secondary metabolite biosynthesis; flavonoid biosynthesis. The primary product of this enzyme is 4,2',4',6'-tetrahydroxychalcone (also termed naringenin-chalcone or chalcone) which can under specific conditions spontaneously isomerize into naringenin. This chain is Chalcone synthase 4 (CHS4), found in Bromheadia finlaysoniana (Orchid).